The following is a 128-amino-acid chain: Sirohydrochlorin cobaltochelatase (128 aa).

Residue His-9 is the Proton acceptor of the active site. Residue His-9 coordinates Co(2+). Substrate contacts are provided by residues Lys-43 and Phe-68–His-73. His-73 provides a ligand contact to Co(2+).

It belongs to the CbiX family. CbiXS subfamily. In terms of assembly, homotetramer; dimer of dimers.

It carries out the reaction Co-sirohydrochlorin + 2 H(+) = sirohydrochlorin + Co(2+). The protein operates within cofactor biosynthesis; adenosylcobalamin biosynthesis; cob(II)yrinate a,c-diamide from sirohydrochlorin (anaerobic route): step 1/10. Functionally, catalyzes the insertion of Co(2+) into sirohydrochlorin as part of the anaerobic pathway to cobalamin biosynthesis. The chain is Sirohydrochlorin cobaltochelatase from Saccharolobus islandicus (strain Y.G.57.14 / Yellowstone #1) (Sulfolobus islandicus).